Reading from the N-terminus, the 546-residue chain is Medium-chain-fatty-acid--CoA ligase (546 aa).

Thr-185 provides a ligand contact to Mg(2+). Residues Trp-235 and Thr-329 each coordinate ATP. Residue Glu-330 coordinates Mg(2+). Positions 417, 434, 438, and 443 each coordinate ATP.

The protein belongs to the ATP-dependent AMP-binding enzyme family.

It is found in the cytoplasm. The enzyme catalyses a medium-chain fatty acid + ATP + CoA = a medium-chain fatty acyl-CoA + AMP + diphosphate. It participates in lipid metabolism; fatty acid metabolism. The chain is Medium-chain-fatty-acid--CoA ligase from Ectopseudomonas oleovorans (Pseudomonas oleovorans).